The primary structure comprises 586 residues: Paxillin (586 aa).

An N-acetylmethionine modification is found at Met-1. The short motif at 3–15 (DLDALLADLESTT) is the LD motif 1 element. Residues 13 to 138 (STTSHISKRP…PSPTVMSSSL (126 aa)) form a disordered region. Phosphotyrosine; by PTK6 is present on Tyr-31. Pro residues predominate over residues 45–54 (VPPPVPPPPS). Ser-83 and Ser-85 each carry phosphoserine. The span at 86 to 98 (PIYSSSTKNSSAS) shows a compositional bias: low complexity. Tyr-88 is subject to Phosphotyrosine. At Ser-106 the chain carries Phosphoserine. Tyr-118 bears the Phosphotyrosine; by PTK6 mark. Ser-119, Ser-126, and Ser-130 each carry phosphoserine. Residues 121-137 (PNKQKSAEPSPTVMSSS) are compositionally biased toward polar residues. Thr-132 is modified (phosphothreonine). 3 positions are modified to phosphoserine: Ser-137, Ser-140, and Ser-143. The short motif at 144–156 (ELDRLLLELNAVQ) is the LD motif 2 element. Tyr-210 bears the Phosphotyrosine mark. Residues 220–241 (GGKAGPLMKEKPKRNGGRGLED) form a disordered region. An LD motif 3 motif is present at residues 245–257 (SVESLLDELENSV). Ser-259 carries the post-translational modification Phosphoserine. Residues 266–290 (VNQGEMSSPQRVTSSQQQTRISASS) form a disordered region. Ser-273 is modified (phosphoserine; by CDK5). Ser-279, Ser-287, Ser-290, Ser-301, Ser-317, Ser-327, and Ser-335 each carry phosphoserine. The interval 291 to 310 (ATRELDELMASLSDFKFMAQ) is required for binding to PARVA and ILK. The LD motif 4 signature appears at 294 to 305 (ELDELMASLSDF). The disordered stretch occupies residues 309 to 329 (AQGKTGSSSPPGGLSKPGSQL). The segment covering 310-329 (QGKTGSSSPPGGLSKPGSQL) has biased composition (low complexity). Residues 328 to 340 (QLDSMLGSLQSDL) carry the LD motif 5 motif. LIM zinc-binding domains lie at 353 to 403 (CGAC…CEKD), 412 to 462 (CYYC…CRKD), and 471 to 521 (CGGC…CEVH). A Phosphoserine modification is found at Ser-528. In terms of domain architecture, LIM zinc-binding 4 spans 530 to 580 (CSGCQKPITGRCITAMAKKFHPEHFVCAFCLKQLNKGTFKEQNDKPYCQSC).

This sequence belongs to the paxillin family. In terms of assembly, interacts in vitro with VCL/vinculin as well as to the SH3 domain of SRC and, when tyrosine phosphorylated, to the SH2 domain of CRK. Interacts with GIT1. Interacts with NUDT16L1/SDOS. Interacts with PTK2/FAK1. Interacts with PTK2B/PYK2. Interacts with ASAP2. Interacts with unphosphorylated ITGA4. Interacts with RNF5. Interacts with PDCD10. Interacts with NEK3, the interaction is prolactin-dependent. Interacts with PTK6. Interacts with TGFB1I1. Interacts with SORBS1. Interacts with PARVB. Interacts (via LD motif 4) with PARVA/PARVIN. Interacts (via LD motif 4) with ILK. Interacts (via cytoplasmic domain) with CEACAM1; the interaction is phosphotyrosyl-dependent. Interacts with LIMA1; this complex stabilizes actin dynamics. Interacts with CD36 (via C-terminus). Interacts with TRIM15. Interacts with PAK4; PAK4 acts as a scaffold to suppport PAXI phosphorylation at Ser-301. Post-translationally, phosphorylated by MAPK1/ERK2. Phosphorylated on tyrosine residues during integrin-mediated cell adhesion, embryonic development, fibroblast transformation and following stimulation of cells by mitogens. Phosphorylation at Ser-273 by CDK5 reduces its interaction with PTK2/FAK1 in matrix-cell focal adhesions (MCFA) during oligodendrocytes (OLs) differentiation. Phosphorylation at Tyr-31 and Tyr-118 by PTK6 promote the activation of RAC1 via CRK/CrKII, thereby promoting migration and invasion. Phosphorylation at Ser-279 by SLK is required for PXN redistribution and cell motility. Phosphorylation at Ser-301 promotes focal adhesion disassembly during cell migration.

The protein localises to the cytoplasm. It is found in the cytoskeleton. The protein resides in the cell junction. It localises to the focal adhesion. Its subcellular location is the cell cortex. Functionally, cytoskeletal protein involved in actin-membrane attachment at sites of cell adhesion to the extracellular matrix (focal adhesion). Recruits other proteins such as TRIM15 to focal adhesion. This Rattus norvegicus (Rat) protein is Paxillin.